Consider the following 216-residue polypeptide: Glycerol-3-phosphate acyltransferase (216 aa).

A run of 6 helical transmembrane segments spans residues 3-23 (FPIF…YWIA), 48-68 (IGWK…MLPV), 82-102 (FQLL…FLGF), 112-132 (FGVF…VFWV), 142-162 (LGSI…TILL), and 166-186 (EVSY…ILTH).

Belongs to the PlsY family. In terms of assembly, probably interacts with PlsX.

The protein resides in the cell inner membrane. The enzyme catalyses an acyl phosphate + sn-glycerol 3-phosphate = a 1-acyl-sn-glycero-3-phosphate + phosphate. It participates in lipid metabolism; phospholipid metabolism. Functionally, catalyzes the transfer of an acyl group from acyl-phosphate (acyl-PO(4)) to glycerol-3-phosphate (G3P) to form lysophosphatidic acid (LPA). This enzyme utilizes acyl-phosphate as fatty acyl donor, but not acyl-CoA or acyl-ACP. In Leptospira interrogans serogroup Icterohaemorrhagiae serovar Lai (strain 56601), this protein is Glycerol-3-phosphate acyltransferase.